Here is a 152-residue protein sequence, read N- to C-terminus: Synaptobrevin (152 aa).

The segment covering 1–16 (MENNEAPSPSGSNNND) has biased composition (polar residues). The tract at residues 1–30 (MENNEAPSPSGSNNNDFPILPPPPNANDNY) is disordered. Topologically, residues 1 to 110 (MENNEAPSPS…KRKQWWANMK (110 aa)) are cytoplasmic. The 61-residue stretch at 47–107 (KLQQTQAKVD…GKLKRKQWWA (61 aa)) folds into the v-SNARE coiled-coil homology domain. Residues 111 to 130 (MMIILGVIAVVLLIIVLVSV) traverse the membrane as a helical; Anchor for type IV membrane protein segment. The Vesicular portion of the chain corresponds to 131–152 (WPSSSDSGSGGGNKAITQAPPH). A disordered region spans residues 133–152 (SSSDSGSGGGNKAITQAPPH).

The protein belongs to the synaptobrevin family. Part of the SNARE core complex containing Snap25 and syntaxin. Ubiquitinated by gzl, regulating endocytic trafficking. In wing imaginal disks, ubiquitination by gzl promotes transcytosis of wingless (wg) to the basolateral surface. In terms of tissue distribution, not nervous system-specific; abundant in cells of the gut and Malpighian tubules.

It is found in the cytoplasmic vesicle. It localises to the secretory vesicle. The protein resides in the synaptic vesicle membrane. Its subcellular location is the cell membrane. In terms of biological role, involved in the targeting and/or fusion of transport vesicles to their target membrane. The polypeptide is Synaptobrevin (Drosophila melanogaster (Fruit fly)).